A 195-amino-acid polypeptide reads, in one-letter code: Adenylate kinase (195 aa).

10–15 is an ATP binding site; it reads GAGKGT. An NMP region spans residues 30 to 59; that stretch reads STGDMLRAAVAAGTPVGLKAKAVMDAGGLV. AMP is bound by residues T31, R36, 57 to 59, 85 to 88, and Q92; these read GLV and GFPR. The LID stretch occupies residues 126–143; sequence NRAAEAQAKGEAVRKDDD. R127 serves as a coordination point for ATP. Position 150 (R150) interacts with AMP. A178 contributes to the ATP binding site.

The protein belongs to the adenylate kinase family. In terms of assembly, monomer.

It is found in the cytoplasm. It catalyses the reaction AMP + ATP = 2 ADP. It participates in purine metabolism; AMP biosynthesis via salvage pathway; AMP from ADP: step 1/1. Functionally, catalyzes the reversible transfer of the terminal phosphate group between ATP and AMP. Plays an important role in cellular energy homeostasis and in adenine nucleotide metabolism. The polypeptide is Adenylate kinase (Xanthobacter autotrophicus (strain ATCC BAA-1158 / Py2)).